The sequence spans 297 residues: MPLSGTPAPNKKRKSSKLIMELTGGGQESSGLNLGKKISVPRDVMLEELSLLTNRGSKMFKLRQLRVEKFIYENHPDVFSDSSMDRFQKFIPTVGGQLGTAGQGFSYSKSSGGGQAGRSGSAGQYGSDQQHHHQGSGSGSGSGSGPGSGGAGGPGGHSGRGGALPDNQAGGEGKHITVFKTYISPWEKAMGIDPQQKVELGIDLLAYGAKAELPKYKSFNRTAMPYGGYEKASKRMTFQMPKFDLGPLLSEPLVLYNQNLSNRPSFNRTPIPWLSSGEPVDYNVDISIPLDGETEEL.

The interval 1–34 (MPLSGTPAPNKKRKSSKLIMELTGGGQESSGLNL) is disordered. A Phosphoserine modification is found at Ser-82. The segment at 105–172 (FSYSKSSGGG…ALPDNQAGGE (68 aa)) is disordered. The segment covering 118–128 (RSGSAGQYGSD) has biased composition (low complexity). Residues 136 to 162 (SGSGSGSGSGPGSGGAGGPGGHSGRGG) show a composition bias toward gly residues.

Belongs to the myozenin family. As to quaternary structure, interacts with ACTN2, ACTN3, FLNA, FLNB, FLNC, LDB3, PPP3CA and TCAP. Interacts via its C-terminal region with MYOT.

The protein resides in the nucleus. The protein localises to the cell projection. Its subcellular location is the pseudopodium. Myozenins may serve as intracellular binding proteins involved in linking Z-disk proteins such as alpha-actinin, gamma-filamin, TCAP/telethonin, LDB3/ZASP and localizing calcineurin signaling to the sarcomere. Plays an important role in the modulation of calcineurin signaling. May play a role in myofibrillogenesis. The sequence is that of Myozenin-1 (MYOZ1) from Bos taurus (Bovine).